The following is a 689-amino-acid chain: Armadillo-like helical domain-containing protein 3 (689 aa).

Residues 520–538 form a helical membrane-spanning segment; that stretch reads IFQLALQVVNLFNMFITYG.

This sequence belongs to the ARMH3 family.

The protein localises to the golgi apparatus membrane. It is found in the cytoplasm. Functionally, may be involved in Golgi maintenance and protein secretion. The protein is Armadillo-like helical domain-containing protein 3 of Danio rerio (Zebrafish).